Here is a 666-residue protein sequence, read N- to C-terminus: UvrABC system protein B (666 aa).

In terms of domain architecture, Helicase ATP-binding spans 26–414 (DSFQKGEKKV…KVVEQIIRPT (389 aa)). 39-46 (GVTGSGKT) contacts ATP. The Beta-hairpin motif lies at 92-115 (YYDYYQPEAYVPSSDTFIEKDSSI). The Helicase C-terminal domain maps to 429 to 591 (QIEDLLVEIR…ITPLTIKKEV (163 aa)). Positions 625-660 (EVLKEKLREEMMKAAKELDFERAAILRDKMLSIQTE) constitute a UVR domain.

This sequence belongs to the UvrB family. Forms a heterotetramer with UvrA during the search for lesions. Interacts with UvrC in an incision complex.

The protein localises to the cytoplasm. Its function is as follows. The UvrABC repair system catalyzes the recognition and processing of DNA lesions. A damage recognition complex composed of 2 UvrA and 2 UvrB subunits scans DNA for abnormalities. Upon binding of the UvrA(2)B(2) complex to a putative damaged site, the DNA wraps around one UvrB monomer. DNA wrap is dependent on ATP binding by UvrB and probably causes local melting of the DNA helix, facilitating insertion of UvrB beta-hairpin between the DNA strands. Then UvrB probes one DNA strand for the presence of a lesion. If a lesion is found the UvrA subunits dissociate and the UvrB-DNA preincision complex is formed. This complex is subsequently bound by UvrC and the second UvrB is released. If no lesion is found, the DNA wraps around the other UvrB subunit that will check the other stand for damage. The protein is UvrABC system protein B of Leptospira interrogans serogroup Icterohaemorrhagiae serovar copenhageni (strain Fiocruz L1-130).